A 161-amino-acid polypeptide reads, in one-letter code: MHNLLALWQQRTRRERCLLLGMAVVLLIGLVYYTLWQPWQNREAQWRQTLAREQASLQWMRQQTPLIRQLRNQKPPTAPEEPSTVIMREAARHGLTIVRLQPQGSRLSLTVQPADFQALMAWLDALGQAGMTTATLAVTAVAQQPGWVTVNTLVLERSDEK.

The Cytoplasmic portion of the chain corresponds to 1 to 16 (MHNLLALWQQRTRRER). The chain crosses the membrane as a helical span at residues 17–36 (CLLLGMAVVLLIGLVYYTLW). Residues 37–161 (QPWQNREAQW…TLVLERSDEK (125 aa)) are Periplasmic-facing.

Belongs to the GSP M family. In terms of assembly, type II secretion system is composed of four main components: the outer membrane complex, the inner membrane complex, the cytoplasmic secretion ATPase and the periplasm-spanning pseudopilus. Forms homodimers. Interacts with PulL/GspL. Interacts with PulE/GspE and PulF/GspF.

The protein localises to the cell inner membrane. Inner membrane component of the type II secretion system required for the energy-dependent secretion of extracellular factors such as proteases and toxins from the periplasm. Plays a role in the complex assembly and recruits PulL resulting in a stable complex in the inner membrane. Provides thus a link between the energy-providing PulE protein in the cytoplasm and the rest of the T2SS machinery. This chain is Type II secretion system protein M (pulM), found in Klebsiella pneumoniae.